An 81-amino-acid chain; its full sequence is Protein K6 (81 aa).

This sequence belongs to the poxviridae K6 protein family.

The chain is Protein K6 from Homo sapiens (Human).